The sequence spans 287 residues: Movement protein BC1 (287 aa).

Belongs to the begomovirus movement protein BC1 family. As to quaternary structure, binds to dimeric supercoiled plasmid DNA. Post-translationally, phosphorylated.

The protein localises to the host cell membrane. Its subcellular location is the host microsome membrane. It localises to the host endoplasmic reticulum membrane. Functionally, transports viral genome to neighboring plant cells directly through plasmosdesmata, without any budding. The movement protein allows efficient cell to cell propagation, by bypassing the host cell wall barrier. Begomovirus genome is shuttled out of nucleus by Nuclear shuttle protein (NSP) and the movement protein transports the DNA-NSP complex to cell plasmodesmata and facilitates further movement across the cell wall. The sequence is that of Movement protein BC1 from Manihot esculenta (Cassava).